A 101-amino-acid chain; its full sequence is ATP synthase subunit f, mitochondrial (101 aa).

Residues 1–6 (MIFKRA) constitute a mitochondrion transit peptide.

The protein belongs to the ATPase F chain family. As to quaternary structure, F-type ATPases have 2 components, CF(1) - the catalytic core - and CF(0) - the membrane proton channel. In yeast, the dimeric form of ATP synthase consists of 17 polypeptides: alpha, beta, gamma, delta, epsilon, 4 (B), 5 (OSCP), 6 (A), 8, 9 (C), d, E (Tim11), f, g, h, i/j and k.

It is found in the mitochondrion. It localises to the mitochondrion inner membrane. Its function is as follows. Mitochondrial membrane ATP synthase (F(1)F(0) ATP synthase or Complex V) produces ATP from ADP in the presence of a proton gradient across the membrane which is generated by electron transport complexes of the respiratory chain. F-type ATPases consist of two structural domains, F(1) - containing the extramembraneous catalytic core and F(0) - containing the membrane proton channel, linked together by a central stalk and a peripheral stalk. During catalysis, ATP synthesis in the catalytic domain of F(1) is coupled via a rotary mechanism of the central stalk subunits to proton translocation. Part of the complex F(0) domain. Minor subunit located with subunit a in the membrane. This is ATP synthase subunit f, mitochondrial (ATP17) from Saccharomyces cerevisiae (strain ATCC 204508 / S288c) (Baker's yeast).